The chain runs to 320 residues: MNVQEQQAIRKLLSRIERQTKMKNADNISRTNAYKAFYDRHPEIKWSLLASFVSRNAGWSMTDLKGSLFQLGLRERQQKWFFLAYERANWLIFSDAYPQLLLYHWSKRVGKPLFHLLHVFGVSQFMSEEWTRFWHERNTERLMYALIINEQNTIQTPIIQNPSFKKNVFDTIPFYLSDWFHFNTVIFPSSNGFFYGISVKRFSKAEERIRLGKQLSQLLFKPELFSSFYHFLHTVPHTGSRFDMEKMIGITKRTSPMLRTCYPELIHSLDGTKTDWFHGKIKKTFFRREELPKQIELTDWYLHKKRQLHALFAVEQWLKK.

This is an uncharacterized protein from Bacillus subtilis (strain 168).